Reading from the N-terminus, the 952-residue chain is Inter-alpha-trypsin inhibitor heavy chain H5 (952 aa).

An N-terminal signal peptide occupies residues 1–17 (MLLLLGLCLGLPLFSES). The region spanning 35–161 (VPRQLRLLQR…KAAFFLSYEE (127 aa)) is the VIT domain. Asn-97, Asn-127, Asn-136, and Asn-231 each carry an N-linked (GlcNAc...) asparagine glycan. Residues 113–131 (QKDKKSSESVKDKRNRTSD) are compositionally biased toward basic and acidic residues. Residues 113–138 (QKDKKSSESVKDKRNRTSDDNEENGS) are disordered. The 184-residue stretch at 295 to 478 (NVVFVLDISA…AQLIGFYDEI (184 aa)) folds into the VWFA domain. N-linked (GlcNAc...) asparagine glycosylation is found at Asn-508, Asn-776, Asn-795, and Asn-862. A disordered region spans residues 933 to 952 (ALGLSTPRKPETDRPHEESV). Basic and acidic residues predominate over residues 940-952 (RKPETDRPHEESV).

Belongs to the ITIH family.

The protein localises to the secreted. May act as a tumor suppressor. The polypeptide is Inter-alpha-trypsin inhibitor heavy chain H5 (Itih5) (Mus musculus (Mouse)).